The sequence spans 24 residues: Acetylcholine receptor subunit alpha (24 aa).

It belongs to the ligand-gated ion channel (TC 1.A.9) family. Acetylcholine receptor (TC 1.A.9.1) subfamily. Alpha-1/CHRNA1 sub-subfamily. One of the alpha chains that assemble within the acetylcholine receptor, a pentamer of two alpha chains, a beta, a delta, and a gamma or epsilon chains.

It is found in the postsynaptic cell membrane. Its subcellular location is the cell membrane. It catalyses the reaction K(+)(in) = K(+)(out). The catalysed reaction is Na(+)(in) = Na(+)(out). Upon acetylcholine binding, the AChR responds by an extensive change in conformation that affects all subunits and leads to opening of an ion-conducting channel across the plasma membrane. This is Acetylcholine receptor subunit alpha (chrna1) from Electrophorus electricus (Electric eel).